The following is a 152-amino-acid chain: Large ribosomal subunit protein bL9 (152 aa).

Belongs to the bacterial ribosomal protein bL9 family.

In terms of biological role, binds to the 23S rRNA. This chain is Large ribosomal subunit protein bL9, found in Synechococcus sp. (strain CC9605).